Reading from the N-terminus, the 138-residue chain is Large ribosomal subunit protein uL16 (138 aa).

This sequence belongs to the universal ribosomal protein uL16 family. As to quaternary structure, part of the 50S ribosomal subunit.

Functionally, binds 23S rRNA and is also seen to make contacts with the A and possibly P site tRNAs. The protein is Large ribosomal subunit protein uL16 of Hyphomonas neptunium (strain ATCC 15444).